The sequence spans 144 residues: Large ribosomal subunit protein uL15 (144 aa).

The disordered stretch occupies residues 1 to 54 (MRLNTLSPAEGSKKAGKRLGRGIGSGLGKTGGRGHKGQKSRSGGGVRRGFEGGQ). The segment covering 21–31 (RGIGSGLGKTG) has biased composition (gly residues).

It belongs to the universal ribosomal protein uL15 family. Part of the 50S ribosomal subunit.

Functionally, binds to the 23S rRNA. In Salmonella arizonae (strain ATCC BAA-731 / CDC346-86 / RSK2980), this protein is Large ribosomal subunit protein uL15.